Here is a 181-residue protein sequence, read N- to C-terminus: UPF0232 protein MAP_0004 (181 aa).

A compositionally biased stretch (polar residues) spans 1–11 (MSDDQSPSPSG). 2 disordered regions span residues 1-70 (MSDD…PQPL) and 161-181 (APSW…DTYG). The span at 18-39 (LVRRTLEEARAAARAQGKDAGR) shows a compositional bias: basic and acidic residues. The span at 40–50 (GRAAAPTPRRV) shows a compositional bias: low complexity.

It belongs to the UPF0232 family.

This Mycolicibacterium paratuberculosis (strain ATCC BAA-968 / K-10) (Mycobacterium paratuberculosis) protein is UPF0232 protein MAP_0004.